The chain runs to 381 residues: Chymosin (381 aa).

The first 16 residues, 1–16, serve as a signal peptide directing secretion; that stretch reads MRCLVVLLAVFALSQG. Positions 17–58 are cleaved as a propeptide — activation peptide; it reads AEITRIPLYKGKPLRKALKERGLLEDFLQKQQYGVSSEYSGF. The region spanning 74-378 is the Peptidase A1 domain; the sequence is YFGKIYLGTP…DRANNLVGLA (305 aa). Asp92 is an active-site residue. 2 disulfides stabilise this stretch: Cys105-Cys110 and Cys265-Cys269. The active site involves Asp274. Cys308 and Cys341 are joined by a disulfide.

Belongs to the peptidase A1 family. Monomer.

It catalyses the reaction Broad specificity similar to that of pepsin A. Clots milk by cleavage of a single 104-Ser-Phe-|-Met-Ala-107 bond in kappa-chain of casein.. Chymosin is synthesized in the mucosa of the stomach. The enzyme hydrolyzes casein to paracasein. The protein is Chymosin (CYM) of Ovis aries (Sheep).